The following is a 257-amino-acid chain: Lysine-rich coiled-coil protein 1 (257 aa).

The disordered stretch occupies residues asparagine 145–phenylalanine 257. Residues serine 152–arginine 162 show a composition bias toward basic residues. Basic and acidic residues-rich tracts occupy residues histidine 163–proline 176, alanine 183–lysine 193, threonine 200–leucine 212, and arginine 219–glutamate 228. The stretch at glutamate 210–methionine 248 forms a coiled coil.

The sequence is that of Lysine-rich coiled-coil protein 1 (KRCC1) from Bos taurus (Bovine).